A 277-amino-acid chain; its full sequence is Uridine-cytidine kinase 1 (277 aa).

The segment covering 1-10 has biased composition (gly residues); that stretch reads MASAGGGDCE. A disordered region spans residues 1-29; sequence MASAGGGDCEGAGPEADRPHQRPFLIGVS. 30–38 contacts ATP; it reads GGTASGKST. Aspartate 87, tyrosine 115, histidine 120, arginine 169, arginine 178, and glutamine 186 together coordinate substrate. Position 215 (aspartate 215) interacts with ATP. A disordered region spans residues 246–277; that stretch reads RSHKRTFPEPGEHPAVLASGKRSHLESSSRPH. Threonine 251 carries the phosphothreonine modification. Residues 268 to 277 show a composition bias toward basic and acidic residues; it reads SHLESSSRPH.

Belongs to the uridine kinase family.

The enzyme catalyses uridine + ATP = UMP + ADP + H(+). It catalyses the reaction cytidine + ATP = CMP + ADP + H(+). It functions in the pathway pyrimidine metabolism; CTP biosynthesis via salvage pathway; CTP from cytidine: step 1/3. The protein operates within pyrimidine metabolism; UMP biosynthesis via salvage pathway; UMP from uridine: step 1/1. In terms of biological role, phosphorylates uridine and cytidine to uridine monophosphate and cytidine monophosphate. Does not phosphorylate deoxyribonucleosides or purine ribonucleosides. Can use ATP or GTP as a phosphate donor. This chain is Uridine-cytidine kinase 1 (UCK1), found in Bos taurus (Bovine).